A 783-amino-acid polypeptide reads, in one-letter code: DNA repair and recombination protein RAD54-like (783 aa).

Residues Arg2 to Gln9 form a required for chromatin remodeling, strand pairing activities and coupling of ATPase activity region. The residue at position 22 (Thr22) is a Phosphothreonine. Residues Glu165–Glu340 form the Helicase ATP-binding domain. An ATP-binding site is contributed by Asp178 to Thr185. A DEGH box motif is present at residues Asp291–His294. The Helicase C-terminal domain maps to Leu497 to Thr654. Residues Ala737 to Phe783 form a disordered region. A compositionally biased stretch (acidic residues) spans Asp765 to Ala776.

It belongs to the SNF2/RAD54 helicase family. As to quaternary structure, interacts (via N-terminus) with spn-A/Rad51.

Its subcellular location is the nucleus. Its function is as follows. Involved in mitotic DNA repair and meiotic recombination. Functions in the recombinational DNA repair pathway. Essential for interhomolog gene conversion (GC), but may have a less important role in intersister GC than spn-A/Rad51. In the presence of DNA, spn-A/Rad51 enhances the ATPase activity of okr/Rad54. This is DNA repair and recombination protein RAD54-like from Drosophila mojavensis (Fruit fly).